The primary structure comprises 205 residues: UPF0111 protein YkaA (205 aa).

The protein belongs to the UPF0111 family.

The chain is UPF0111 protein YkaA (ykaA) from Bacillus subtilis (strain 168).